A 627-amino-acid chain; its full sequence is (-)-beta-pinene synthase 1, chloroplastic (627 aa).

A chloroplast-targeting transit peptide spans 1–50 (MDLISVLPSTSKSCVCLHKPLSSSTHKLKPFCRTIRILGMPRPRKSVLMA). Aspartate 378, aspartate 382, and aspartate 530 together coordinate Mg(2+). A DDXXD motif motif is present at residues 378-382 (DDMYD).

This sequence belongs to the terpene synthase family. Tpsd subfamily. Requires Mg(2+) as cofactor. Mn(2+) is required as a cofactor.

The protein resides in the plastid. It is found in the chloroplast. The enzyme catalyses (2E)-geranyl diphosphate = (1S,5S)-beta-pinene + diphosphate. It catalyses the reaction (2E)-geranyl diphosphate = (1S,5S)-alpha-pinene + diphosphate. The protein operates within terpene metabolism; oleoresin biosynthesis. It functions in the pathway secondary metabolite biosynthesis; terpenoid biosynthesis. In terms of biological role, monoterpene synthase (TPS) involved in the biosynthesis of monoterpene natural products included in conifer oleoresin secretions and volatile emissions; these compounds contribute to biotic and abiotic stress defense against herbivores and pathogens. Catalyzes the conversion of (2E)-geranyl diphosphate (GPP) to (-)-beta-pinene and, to a lower extent, to (-)-alpha-pinene. The polypeptide is (-)-beta-pinene synthase 1, chloroplastic (Pinus contorta (Shore pine)).